Consider the following 419-residue polypeptide: 3-isopropylmalate dehydratase large subunit (419 aa).

[4Fe-4S] cluster-binding residues include cysteine 300, cysteine 360, and cysteine 363.

The protein belongs to the aconitase/IPM isomerase family. LeuC type 2 subfamily. As to quaternary structure, heterodimer of LeuC and LeuD. [4Fe-4S] cluster serves as cofactor.

The catalysed reaction is (2R,3S)-3-isopropylmalate = (2S)-2-isopropylmalate. The protein operates within amino-acid biosynthesis; L-leucine biosynthesis; L-leucine from 3-methyl-2-oxobutanoate: step 2/4. In terms of biological role, catalyzes the isomerization between 2-isopropylmalate and 3-isopropylmalate, via the formation of 2-isopropylmaleate. This chain is 3-isopropylmalate dehydratase large subunit, found in Clostridium botulinum (strain Eklund 17B / Type B).